We begin with the raw amino-acid sequence, 366 residues long: ABI gene family member 3 (366 aa).

A coiled-coil region spans residues cysteine 33–valine 61. A disordered region spans residues serine 161 to proline 195. Phosphoserine occurs at positions 213 and 216. The segment at glycine 215 to proline 302 is disordered. The segment covering proline 232–alanine 248 has biased composition (pro residues). Positions serine 308–cysteine 366 constitute an SH3 domain. Serine 342 carries the post-translational modification Phosphoserine.

This sequence belongs to the ABI family. May interact with PAK1 and PAK2. Probably interacts with TARSH. As to expression, expressed in heart, lung, liver, pancreas, kidney, placenta and at low levels in brain and skeletal muscle.

The protein resides in the cytoplasm. In terms of biological role, may inhibit tumor metastasis. In vitro, reduces cell motility. The protein is ABI gene family member 3 (ABI3) of Homo sapiens (Human).